The chain runs to 400 residues: S-adenosylmethionine sensor upstream of mTORC1 (400 aa).

Residues Arg99, Gly168, Asp186, Asp198, Phe199, and Ser240 each contribute to the S-adenosyl-L-methionine site.

The protein belongs to the BMT2/SAMTOR family. In terms of assembly, interacts with the GATOR1 complex; interaction is disrupted when samtor binds S-adenosyl-L-methionine. Interacts with the KICSTOR complex; interaction is disrupted when samtor binds S-adenosyl-L-methionine.

Functionally, S-adenosyl-L-methionine-binding protein that acts as an inhibitor of mTORC1 signaling via interaction with the GATOR1 and KICSTOR complexes. Acts as a sensor of S-adenosyl-L-methionine to signal methionine sufficiency to mTORC1: in presence of methionine, binds S-adenosyl-L-methionine, leading to disrupt interaction with the GATOR1 and KICSTOR complexes and promote mTORC1 signaling. Upon methionine starvation, S-adenosyl-L-methionine levels are reduced, thereby promoting the association with GATOR1 and KICSTOR, leading to inhibit mTORC1 signaling. Probably also acts as a S-adenosyl-L-methionine-dependent methyltransferase. This is S-adenosylmethionine sensor upstream of mTORC1 from Xenopus tropicalis (Western clawed frog).